Reading from the N-terminus, the 310-residue chain is p-hydroxybenzoic acid efflux pump subunit AaeA (310 aa).

A helical membrane pass occupies residues alanine 12–tyrosine 32.

The protein belongs to the membrane fusion protein (MFP) (TC 8.A.1) family.

It is found in the cell inner membrane. Forms an efflux pump with AaeB. The chain is p-hydroxybenzoic acid efflux pump subunit AaeA from Escherichia coli O7:K1 (strain IAI39 / ExPEC).